A 385-amino-acid chain; its full sequence is tRNA pseudouridine synthase D (385 aa).

The active-site Nucleophile is the Asp86. Positions 165–305 (GFPNYFGNQR…TRFLQKDIAP (141 aa)) constitute a TRUD domain.

The protein belongs to the pseudouridine synthase TruD family.

It carries out the reaction uridine(13) in tRNA = pseudouridine(13) in tRNA. Functionally, responsible for synthesis of pseudouridine from uracil-13 in transfer RNAs. This chain is tRNA pseudouridine synthase D, found in Helicobacter hepaticus (strain ATCC 51449 / 3B1).